We begin with the raw amino-acid sequence, 229 residues long: Prolactin (229 aa).

An N-terminal signal peptide occupies residues 1 to 30 (MDSKGSSQKGSRLLLLLVVSNLLLCQGVVS). Residues Cys34 and Cys41 are joined by a disulfide bond. Residues Ser56, Ser64, and Ser120 each carry the phosphoserine modification. Intrachain disulfides connect Cys88–Cys204 and Cys221–Cys229.

Belongs to the somatotropin/prolactin family. As to quaternary structure, interacts with PRLR.

The protein resides in the secreted. In terms of biological role, prolactin acts primarily on the mammary gland by promoting lactation. The polypeptide is Prolactin (PRL) (Bos taurus (Bovine)).